A 110-amino-acid chain; its full sequence is Transcription factor S (110 aa).

8 residues coordinate Zn(2+): cysteine 4, cysteine 7, cysteine 22, cysteine 25, cysteine 71, cysteine 74, cysteine 99, and cysteine 102. A C4-type zinc finger spans residues 4–25 (CPKCGNLMLPDRKRKVWVCRSC). The segment at 67–107 (TKITCPKCGNDTAYWWEMQTRAGDEPSTIFYKCTKCGHTWR) adopts a TFIIS-type zinc-finger fold.

This sequence belongs to the archaeal RpoM/eukaryotic RPA12/RPB9/RPC11 RNA polymerase family.

Induces RNA cleavage activity in the RNA polymerase. In its presence, the cleavage activity of the RNA polymerase truncates the RNA back to position +15 in a stepwise manner by releasing mainly dinucleotides from the 3'-end of the nascent RNA. The truncated RNAs are able to continue elongation. Involved in transcriptional proofreading and fidelity. Misincorporation of nucleotides during elongation of transcription leads to arrested elongation complexes which are rescued by TFS-promoted removal of a dinucleotide from the 3'-end. TFS is able to induce a cleavage resynthesis cycle in stalled elongation complexes (resulting from the next missing nucleotide or a reduced incorporation rate of a wrong nucleotide) preventing misincorporation and enabling proofreading in a post-incorporation manner. Pausing of elongation complexes is the main determinant of TFS-induced RNA cleavage. This chain is Transcription factor S, found in Thermococcus celer.